The following is a 202-amino-acid chain: MAAPWRRWPTGLLAVLRPLLTCRPLQGTTLQRDVLLFEHDRGRFFTILGLFCAGQGVFWASMAVAAVSRPPVPVQPLDAEVPNRGPFDLRSALWRYGLAVGCGAIGALVLGAGLLFSLRSVRSVVLRAGGQQVTLTTHAPFGLGAHFTVPLKQVSCMAHRGEVPAMLPLKVKGRRFYFLLDKTGHFPNTKLFDNTVGAYRSL.

Over 1–43 (MAAPWRRWPTGLLAVLRPLLTCRPLQGTTLQRDVLLFEHDRGR) the chain is Mitochondrial matrix. The chain crosses the membrane as a helical span at residues 44 to 64 (FFTILGLFCAGQGVFWASMAV). At 65 to 97 (AAVSRPPVPVQPLDAEVPNRGPFDLRSALWRYG) the chain is on the mitochondrial intermembrane side. A helical membrane pass occupies residues 98–118 (LAVGCGAIGALVLGAGLLFSL). At 119–202 (RSVRSVVLRA…DNTVGAYRSL (84 aa)) the chain is on the mitochondrial matrix side.

This sequence belongs to the TMEM223 family. Associates with the mitochondrial ribosome.

It is found in the mitochondrion inner membrane. Its function is as follows. Mitochondrial ribosome-associated protein involved in the first steps of cytochrome c oxidase complex (complex IV) biogenesis. Stimulates the translation of MT-CO1 mRNA and is a constituent of early MT-CO1 assembly intermediates. The protein is Transmembrane protein 223 of Homo sapiens (Human).